The chain runs to 225 residues: ATP synthase F(0) complex subunit a (225 aa).

Helical transmembrane passes span 10–30 (PSLLGISLLMPALLMTTILLL), 69–89 (LILISLLILLSLTNLLGLLPY), 96–116 (QLSMNMAIALPLWLVTVLIGL), 135–155 (LLIPILILIETISLLIRPIAL), 168–188 (LLIQLISIATLNLWFMMPPLS), and 194–214 (VLILLLLLEFAVAMIQAYVFV).

The protein belongs to the ATPase A chain family. As to quaternary structure, component of the ATP synthase complex composed at least of ATP5F1A/subunit alpha, ATP5F1B/subunit beta, ATP5MC1/subunit c (homooctomer), MT-ATP6/subunit a, MT-ATP8/subunit 8, ATP5ME/subunit e, ATP5MF/subunit f, ATP5MG/subunit g, ATP5MK/subunit k, ATP5MJ/subunit j, ATP5F1C/subunit gamma, ATP5F1D/subunit delta, ATP5F1E/subunit epsilon, ATP5PF/subunit F6, ATP5PB/subunit b, ATP5PD/subunit d, ATP5PO/subunit OSCP. ATP synthase complex consists of a soluble F(1) head domain (subunits alpha(3) and beta(3)) - the catalytic core - and a membrane F(0) domain - the membrane proton channel (subunits c, a, 8, e, f, g, k and j). These two domains are linked by a central stalk (subunits gamma, delta, and epsilon) rotating inside the F1 region and a stationary peripheral stalk (subunits F6, b, d, and OSCP). Interacts with DNAJC30; interaction is direct.

The protein localises to the mitochondrion inner membrane. It carries out the reaction H(+)(in) = H(+)(out). Its function is as follows. Subunit a, of the mitochondrial membrane ATP synthase complex (F(1)F(0) ATP synthase or Complex V) that produces ATP from ADP in the presence of a proton gradient across the membrane which is generated by electron transport complexes of the respiratory chain. ATP synthase complex consist of a soluble F(1) head domain - the catalytic core - and a membrane F(1) domain - the membrane proton channel. These two domains are linked by a central stalk rotating inside the F(1) region and a stationary peripheral stalk. During catalysis, ATP synthesis in the catalytic domain of F(1) is coupled via a rotary mechanism of the central stalk subunits to proton translocation. With the subunit c (ATP5MC1), forms the proton-conducting channel in the F(0) domain, that contains two crucial half-channels (inlet and outlet) that facilitate proton movement from the mitochondrial intermembrane space (IMS) into the matrix. Protons are taken up via the inlet half-channel and released through the outlet half-channel, following a Grotthuss mechanism. The chain is ATP synthase F(0) complex subunit a from Alligator mississippiensis (American alligator).